The following is a 169-amino-acid chain: Disulfide bond formation protein B 1 (169 aa).

Over 1–14 the chain is Cytoplasmic; sequence MSEETIRLGRERRY. Residues 15–31 traverse the membrane as a helical segment; the sequence is LVLLGIICLALIGGALY. Topologically, residues 32–49 are periplasmic; that stretch reads MQIVLGEAPCPLCILQRY. C41 and C44 are disulfide-bonded. Residues 50–64 form a helical membrane-spanning segment; it reads ALLLIALFAFIGAAM. The Cytoplasmic portion of the chain corresponds to 65-71; that stretch reads RTRRSIT. Residues 72–89 traverse the membrane as a helical segment; it reads VFEVLVVICAIAGAGVAG. The Periplasmic segment spans residues 90–144; that stretch reads HHVYTQFYPAVSCGIDVLQPIVDDLPLAKIFPLGFQVDGFCSTPYPPILGLSLAQ. C102 and C130 are joined by a disulfide. The helical transmembrane segment at 145 to 163 threads the bilayer; that stretch reads WALVAFVLVVILVPLLTSR. Residues 164 to 169 lie on the Cytoplasmic side of the membrane; the sequence is NRKALR.

Belongs to the DsbB family.

The protein localises to the cell inner membrane. Required for disulfide bond formation in some periplasmic proteins. Acts by oxidizing the DsbA protein. The sequence is that of Disulfide bond formation protein B 1 from Pseudomonas fluorescens (strain Pf0-1).